We begin with the raw amino-acid sequence, 421 residues long: Hydrolyase poxO (421 aa).

S239 acts as the Nucleophile in catalysis.

It belongs to the AB hydrolase superfamily. FUS2 hydrolase family. In terms of assembly, homodimer.

It participates in secondary metabolite biosynthesis. Hydrolyase; part of the gene cluster that mediates the biosynthesis of oxaleimides, cytotoxic compounds containing an unusual disubstituted succinimide moiety. The first step of the pathway is provided by the HR-PKS poxF that serves in a new mode of collaborative biosynthesis with the PKS-NRPS poxE, by providing the olefin containing amino acid substrate via the synthesis of an ACP-bound dec-4-enoate. The cytochrome P450 monooxygenase poxM-catalyzed oxidation at the alpha-position creates the enzyme-bound 2-hydroxydec-4-enoyl-ACP thioester, which may be prone to spontaneous hydrolysis to yield 2-hydroxydec-4-enoic acid due to increased electrophilicity of the carbonyl. 2-hydroxydec-4-enoic acid can then be further oxidized by poxM to yield the alpha-ketoacid 2-oxodec-4-enoicacid, which is reductively aminated by the aminotransferase poxL to yield (S,E)-2-aminodec-4-enoic acid. The Hybrid PKS-NRPS synthetase poxE then performs condensation between the octaketide product of its PKS modules and the amino group of (S,E)-2-aminodec-4-enoic acid which is activated and incorporated by the adenylation domain. The resulting aminoacyl product can be cyclized by the Diels-Alderase PoxQ and reductively released by the reductive (R) domain of poxE to yield an aldehyde intermediate. The released aldehyde is then substrate for a Knoevenagel condensation by the hydrolyase poxO followed by an oxidation at the 5-position of the pyrrolidone ring. The presence of the olefin from the amino acid building block allows for migration of the substituted allyl group to occur. This allylic transposition reaction takes place in a conjugate addition, semipinacol-like fashion to yield a succinimide intermediate. Iterative two-electron oxidations of the C7 methyl of the succinimide intermediate to the carboxylic acid can be catalyzed by one of two remaining cytochrome P450 monooxygenasess poxC or poxD to yield oxaleimide A. Subsequent oxidation yields the maleimide scaffold oxaleimide I. Both oxaleimide A and oxaleimide I can undergo oxidative modifications in the decalin ring to yield the series of products oxaleimides B to H. The protein is Hydrolyase poxO of Penicillium oxalicum (strain 114-2 / CGMCC 5302) (Penicillium decumbens).